The following is a 348-amino-acid chain: tRNA pseudouridine synthase D (348 aa).

Phe-26 lines the substrate pocket. The Nucleophile role is filled by Asp-79. Position 128 (Asn-128) interacts with substrate. In terms of domain architecture, TRUD spans 154–302; that stretch reads GVPNYFGSQR…VDPARRALLL (149 aa). Position 328 (Phe-328) interacts with substrate.

This sequence belongs to the pseudouridine synthase TruD family.

It catalyses the reaction uridine(13) in tRNA = pseudouridine(13) in tRNA. Responsible for synthesis of pseudouridine from uracil-13 in transfer RNAs. This is tRNA pseudouridine synthase D from Serratia proteamaculans (strain 568).